The chain runs to 470 residues: V-type proton ATPase subunit S1 (470 aa).

Positions 1–41 (MMAAMATARVRMGPRCAQALWRMPWLPVFLSLAAAAAAAAA) are cleaved as a signal peptide. A propeptide spanning residues 42–231 (EQQVPLVLWS…TAVRPSRVAR (190 aa)) is cleaved from the precursor. Over 42-419 (EQQVPLVLWS…EQFSYASDCA (378 aa)) the chain is Lumenal. Asn-170, Asn-261, Asn-273, Asn-296, Asn-303, Asn-350, and Asn-357 each carry an N-linked (GlcNAc...) asparagine glycan. Residues Cys-371 and Cys-418 are joined by a disulfide bond. Residues 420–440 (SFFSPGIWMGLLTSLFMLFIF) form a helical membrane-spanning segment. Residues 441 to 470 (TYGLHMILSLKTMDRFDDHKGPTISLTQIV) are Cytoplasmic-facing. Ser-465 is modified (phosphoserine).

This sequence belongs to the vacuolar ATPase subunit S1 family. In terms of assembly, accessory component of the multisubunit proton-transporting vacuolar (V)-ATPase protein pump. Interacts (via N-terminus) with ATP6AP2 (via N-terminus). Interacts with RNASEK. Interacts with TMEM106B (via C-terminus). Post-translationally, N-glycosylated. In terms of tissue distribution, widely expressed, with highest levels in brain and lowest in liver and duodenum.

It is found in the endoplasmic reticulum membrane. The protein localises to the endoplasmic reticulum-Golgi intermediate compartment membrane. Its subcellular location is the cytoplasmic vesicle. It localises to the secretory vesicle. The protein resides in the synaptic vesicle membrane. It is found in the clathrin-coated vesicle membrane. Its function is as follows. Accessory subunit of the proton-transporting vacuolar (V)-ATPase protein pump, which is required for luminal acidification of secretory vesicles. Guides the V-type ATPase into specialized subcellular compartments, such as neuroendocrine regulated secretory vesicles or the ruffled border of the osteoclast, thereby regulating its activity. Involved in membrane trafficking and Ca(2+)-dependent membrane fusion. May play a role in the assembly of the V-type ATPase complex. In aerobic conditions, involved in intracellular iron homeostasis, thus triggering the activity of Fe(2+) prolyl hydroxylase (PHD) enzymes, and leading to HIF1A hydroxylation and subsequent proteasomal degradation. In islets of Langerhans cells, may regulate the acidification of dense-core secretory granules. This chain is V-type proton ATPase subunit S1 (ATP6AP1), found in Homo sapiens (Human).